The following is a 175-amino-acid chain: Peptide methionine sulfoxide reductase MsrA (175 aa).

Cys-10 is an active-site residue.

Belongs to the MsrA Met sulfoxide reductase family.

The enzyme catalyses L-methionyl-[protein] + [thioredoxin]-disulfide + H2O = L-methionyl-(S)-S-oxide-[protein] + [thioredoxin]-dithiol. The catalysed reaction is [thioredoxin]-disulfide + L-methionine + H2O = L-methionine (S)-S-oxide + [thioredoxin]-dithiol. Its function is as follows. Has an important function as a repair enzyme for proteins that have been inactivated by oxidation. Catalyzes the reversible oxidation-reduction of methionine sulfoxide in proteins to methionine. The chain is Peptide methionine sulfoxide reductase MsrA from Psychrobacter sp. (strain PRwf-1).